Reading from the N-terminus, the 341-residue chain is L-threonine 3-dehydrogenase (341 aa).

Residue Cys-38 participates in Zn(2+) binding. Residues Thr-40 and His-43 each act as charge relay system in the active site. The Zn(2+) site is built by His-63, Glu-64, Cys-93, Cys-96, Cys-99, and Cys-107. Residues Ile-175, Asp-195, Arg-200, 262–264 (LGI), and 286–287 (IY) contribute to the NAD(+) site.

It belongs to the zinc-containing alcohol dehydrogenase family. Homotetramer. It depends on Zn(2+) as a cofactor.

It is found in the cytoplasm. The catalysed reaction is L-threonine + NAD(+) = (2S)-2-amino-3-oxobutanoate + NADH + H(+). Its pathway is amino-acid degradation; L-threonine degradation via oxydo-reductase pathway; glycine from L-threonine: step 1/2. Functionally, catalyzes the NAD(+)-dependent oxidation of L-threonine to 2-amino-3-ketobutyrate. This is L-threonine 3-dehydrogenase from Shewanella frigidimarina (strain NCIMB 400).